Here is a 504-residue protein sequence, read N- to C-terminus: Glutamate--tRNA ligase (504 aa).

The 'HIGH' region motif lies at 12–22; the sequence is PSPTGALHIGG. Residues 260 to 264 carry the 'KMSKS' region motif; that stretch reads KLSKR. Lys263 serves as a coordination point for ATP.

This sequence belongs to the class-I aminoacyl-tRNA synthetase family. Glutamate--tRNA ligase type 1 subfamily. Monomer.

The protein resides in the cytoplasm. The catalysed reaction is tRNA(Glu) + L-glutamate + ATP = L-glutamyl-tRNA(Glu) + AMP + diphosphate. Functionally, catalyzes the attachment of glutamate to tRNA(Glu) in a two-step reaction: glutamate is first activated by ATP to form Glu-AMP and then transferred to the acceptor end of tRNA(Glu). The chain is Glutamate--tRNA ligase from Bacteroides thetaiotaomicron (strain ATCC 29148 / DSM 2079 / JCM 5827 / CCUG 10774 / NCTC 10582 / VPI-5482 / E50).